Reading from the N-terminus, the 229-residue chain is Flagellar L-ring protein (229 aa).

The first 25 residues, 1–25 (MKQVRLLPPAPVRAVCALAVAALAG), serve as a signal peptide directing secretion. C26 carries the N-palmitoyl cysteine lipid modification. A lipid anchor (S-diacylglycerol cysteine) is attached at C26.

Belongs to the FlgH family. The basal body constitutes a major portion of the flagellar organelle and consists of four rings (L,P,S, and M) mounted on a central rod.

The protein resides in the cell outer membrane. It localises to the bacterial flagellum basal body. Assembles around the rod to form the L-ring and probably protects the motor/basal body from shearing forces during rotation. This is Flagellar L-ring protein from Burkholderia ambifaria (strain ATCC BAA-244 / DSM 16087 / CCUG 44356 / LMG 19182 / AMMD) (Burkholderia cepacia (strain AMMD)).